Consider the following 201-residue polypeptide: dITP/XTP pyrophosphatase (201 aa).

8–13 (TNNENK) provides a ligand contact to substrate. Glu41 and Asp73 together coordinate Mg(2+). Residue Asp73 is the Proton acceptor of the active site. Residues Ser74, 154–157 (FGYD), Lys177, and 182–183 (HR) contribute to the substrate site.

It belongs to the HAM1 NTPase family. In terms of assembly, homodimer. Mg(2+) is required as a cofactor.

It carries out the reaction XTP + H2O = XMP + diphosphate + H(+). The catalysed reaction is dITP + H2O = dIMP + diphosphate + H(+). It catalyses the reaction ITP + H2O = IMP + diphosphate + H(+). In terms of biological role, pyrophosphatase that catalyzes the hydrolysis of nucleoside triphosphates to their monophosphate derivatives, with a high preference for the non-canonical purine nucleotides XTP (xanthosine triphosphate), dITP (deoxyinosine triphosphate) and ITP. Seems to function as a house-cleaning enzyme that removes non-canonical purine nucleotides from the nucleotide pool, thus preventing their incorporation into DNA/RNA and avoiding chromosomal lesions. This is dITP/XTP pyrophosphatase from Clostridium tetani (strain Massachusetts / E88).